A 1338-amino-acid polypeptide reads, in one-letter code: Fanconi anemia group I protein (1338 aa).

Lys525 is covalently cross-linked (Glycyl lysine isopeptide (Lys-Gly) (interchain with G-Cter in ubiquitin)). Ser558 and Ser561 each carry phosphoserine. Phosphothreonine is present on Thr567.

It belongs to the Fanconi anemia group I protein family. Homodimer. Part of a FANCI-FANCD2 heterodimeric complex that binds and scans dsDNA for DNA damage. Interacts with FANCL. Interacts with MTMR15/FAN1. Interacts with POLN. Interacts with UBL5; the interaction promotes FANCI homodimerization. Monoubiquitinated by FANCL during S phase and upon genotoxic stress. Deubiquitinated by USP1 as cells enter G2/M, or once DNA repair is completed. Monoubiquitination requires the FANCA-FANCB-FANCC-FANCE-FANCF-FANCG-FANCM complex. Ubiquitination is required for binding to chromatin, DNA repair, and normal cell cycle progression. Monoubiquitination is stimulated by DNA-binding. In terms of processing, phosphorylated in response to DNA damage by ATM and/or ATR. Phosphorylation of FANCI promotes ubiquitination of FANCD2, which prevents DNA release from the FANCI-FANCD2 complex.

In terms of biological role, plays an essential role in the repair of DNA double-strand breaks by homologous recombination and in the repair of interstrand DNA cross-links (ICLs) by promoting FANCD2 monoubiquitination by FANCL and participating in recruitment to DNA repair sites. The FANCI-FANCD2 complex binds and scans double-stranded DNA (dsDNA) for DNA damage; this complex stalls at DNA junctions between double-stranded DNA and single-stranded DNA. Participates in S phase and G2 phase checkpoint activation upon DNA damage. The polypeptide is Fanconi anemia group I protein (Gallus gallus (Chicken)).